A 113-amino-acid chain; its full sequence is MEWLTGLPRVAGLFVLTALAEIVGCYLPWLVLREGRSLWLLAPTTLALALFAWLLTLHPAAAGRTYAAYGGVYVTVAIAWLWLVDGVRPDRWDALGCALALAGMAVIMLAPRS.

A run of 4 helical transmembrane segments spans residues 12 to 32 (GLFVLTALAEIVGCYLPWLVL), 37 to 57 (SLWLLAPTTLALALFAWLLTL), 67 to 87 (AAYGGVYVTVAIAWLWLVDGV), and 91 to 111 (RWDALGCALALAGMAVIMLAP).

It belongs to the UPF0060 family.

The protein localises to the cell inner membrane. This is UPF0060 membrane protein CV_3485 from Chromobacterium violaceum (strain ATCC 12472 / DSM 30191 / JCM 1249 / CCUG 213 / NBRC 12614 / NCIMB 9131 / NCTC 9757 / MK).